A 435-amino-acid chain; its full sequence is MGRPQRGDTAKERRERQDKVTSPPESGPISQSGLSDTVDWTSETNENMWLAYDFDERKDINQARGQDIHRDQELFDVVLQNNMSDDQFASTSASVSDDWYDTGFDQAFLQPSSTSTTAYSVEPSPFISIEPPTLTKETKKRNSQSSDSSKPSSTSSQSLIERVTSLNLDLHQQSIIAGQIVDEFGNIDPDMIDPLHKDNRLSFAVDSMTQGLQNFHSLLLEIINTANGTTFSSESASPHVNRPPIQQQQSPSRFLAPPSRSCVPSLFCFREGNSSQQQSKNNATGIDLPTSLMIISCHIHLIRLCRHVFAGIRAALSSKDQHQQALLVLSSCQVGGVSISHDSDLKLLILIQVVARLINKIGVLLGYPCSPADLSNSAVGNLGNATEDERKKMLLPQLLRFVLAQEGVAGQSSHGDGMEGLREEIRKLNEVLATS.

Positions 1–19 are enriched in basic and acidic residues; sequence MGRPQRGDTAKERRERQDK. 3 disordered regions span residues 1–40, 115–158, and 231–257; these read MGRPQRGDTAKERRERQDKVTSPPESGPISQSGLSDTVDW, STTA…SSQS, and FSSESASPHVNRPPIQQQQSPSRFLAP. The span at 28–40 shows a compositional bias: polar residues; the sequence is PISQSGLSDTVDW. The span at 143–158 shows a compositional bias: low complexity; that stretch reads SQSSDSSKPSSTSSQS.

The protein resides in the nucleus. In terms of biological role, transcription factor; part of the gene cluster that mediates the biosynthesis of GKK1032, fungal natural products containing a macrocyclic para-cyclophane connected to a decahydrofluorene ring system that show potent antitumor activities. The polypeptide is Transcription factor gkaF (Penicillium citrinum).